The primary structure comprises 252 residues: Imidazole glycerol phosphate synthase subunit HisF (252 aa).

Catalysis depends on residues Asp11 and Asp130.

It belongs to the HisA/HisF family. In terms of assembly, heterodimer of HisH and HisF.

The protein localises to the cytoplasm. The enzyme catalyses 5-[(5-phospho-1-deoxy-D-ribulos-1-ylimino)methylamino]-1-(5-phospho-beta-D-ribosyl)imidazole-4-carboxamide + L-glutamine = D-erythro-1-(imidazol-4-yl)glycerol 3-phosphate + 5-amino-1-(5-phospho-beta-D-ribosyl)imidazole-4-carboxamide + L-glutamate + H(+). It functions in the pathway amino-acid biosynthesis; L-histidine biosynthesis; L-histidine from 5-phospho-alpha-D-ribose 1-diphosphate: step 5/9. IGPS catalyzes the conversion of PRFAR and glutamine to IGP, AICAR and glutamate. The HisF subunit catalyzes the cyclization activity that produces IGP and AICAR from PRFAR using the ammonia provided by the HisH subunit. The sequence is that of Imidazole glycerol phosphate synthase subunit HisF from Azoarcus sp. (strain BH72).